The following is a 59-amino-acid chain: Small integral membrane protein 30 (59 aa).

Positions 1-24 (MTSVSTQLSLVLMSLLLVLPVVEA) are cleaved as a signal peptide. Topologically, residues 25–29 (VEAGD) are extracellular. Residues 30 to 50 (AIALLLGVVLSITGICACLGV) traverse the membrane as a helical segment. The Cytoplasmic segment spans residues 51–59 (YARKRNGQM).

In terms of assembly, interacts (via transmembrane domain) with antiviral protein MAVS (via transmembrane domain); the interaction disrupts MAVS interaction with RIGI and inhibits MAVS aggregation, resulting in the repression of type I interferon signaling and innate immune responses.

The protein localises to the endoplasmic reticulum membrane. The protein resides in the mitochondrion membrane. In terms of biological role, negatively regulates antiviral innate immune responses. Disrupts the interaction of antiviral protein MAVS with innate immune receptor RIGI and inhibits MAVS aggregation, resulting in the repression of type I interferon signaling and innate immune responses. This is Small integral membrane protein 30 from Homo sapiens (Human).